Consider the following 427-residue polypeptide: Peptidase B (427 aa).

Mn(2+) contacts are provided by K195 and D200. K207 is an active-site residue. D218, D277, and E279 together coordinate Mn(2+). R281 is an active-site residue.

The protein belongs to the peptidase M17 family. In terms of assembly, homohexamer. The cofactor is Mn(2+).

It is found in the cytoplasm. The enzyme catalyses Release of an N-terminal amino acid, Xaa, from a peptide or arylamide. Xaa is preferably Glu or Asp but may be other amino acids, including Leu, Met, His, Cys and Gln.. Probably plays an important role in intracellular peptide degradation. The protein is Peptidase B of Salmonella agona (strain SL483).